A 698-amino-acid chain; its full sequence is Elongation factor G 1 (698 aa).

Positions 8–290 constitute a tr-type G domain; sequence ERYRNIGICA…AVIEFLPAPV (283 aa). GTP contacts are provided by residues 17 to 24, 88 to 92, and 142 to 145; these read AHVDAGKT, DTPGH, and NKMD.

The protein belongs to the TRAFAC class translation factor GTPase superfamily. Classic translation factor GTPase family. EF-G/EF-2 subfamily.

The protein localises to the cytoplasm. Its function is as follows. Catalyzes the GTP-dependent ribosomal translocation step during translation elongation. During this step, the ribosome changes from the pre-translocational (PRE) to the post-translocational (POST) state as the newly formed A-site-bound peptidyl-tRNA and P-site-bound deacylated tRNA move to the P and E sites, respectively. Catalyzes the coordinated movement of the two tRNA molecules, the mRNA and conformational changes in the ribosome. The sequence is that of Elongation factor G 1 from Aliivibrio fischeri (strain ATCC 700601 / ES114) (Vibrio fischeri).